The sequence spans 172 residues: Translation initiation factor IF-3 (172 aa).

Belongs to the IF-3 family. As to quaternary structure, monomer.

Its subcellular location is the cytoplasm. In terms of biological role, IF-3 binds to the 30S ribosomal subunit and shifts the equilibrium between 70S ribosomes and their 50S and 30S subunits in favor of the free subunits, thus enhancing the availability of 30S subunits on which protein synthesis initiation begins. The polypeptide is Translation initiation factor IF-3 (Geobacter sulfurreducens (strain ATCC 51573 / DSM 12127 / PCA)).